A 104-amino-acid polypeptide reads, in one-letter code: Transcription elongation factor A protein-like 9 (104 aa).

Positions 1-27 (MKSCQKMEGKPENESEPKHEEEPKPEE) are enriched in basic and acidic residues. Positions 1–44 (MKSCQKMEGKPENESEPKHEEEPKPEEKPEEEEKLEEEAKAKGT) are disordered.

It belongs to the TFS-II family. TFA subfamily.

The protein resides in the nucleus. Its function is as follows. May be involved in transcriptional regulation. This Homo sapiens (Human) protein is Transcription elongation factor A protein-like 9.